A 335-amino-acid polypeptide reads, in one-letter code: NAC domain-containing protein 60 (335 aa).

An NAC domain is found at 14–156 (TFPGFKFSPT…ALVICRLRRN (143 aa)). The DNA-binding element occupies 112 to 162 (IGTKRTLVFHIGRAPKGGRTEWLMHEYCMIGVSLDALVICRLRRNTEFQGS). Residues 315–335 (ARWDVVVWLLVMIAVLVFYLV) traverse the membrane as a helical segment.

In terms of tissue distribution, expressed in roots, rosette leaves, cauline leaves, shoot apex, stems and flowers.

The protein resides in the membrane. It localises to the nucleus. Functionally, transcriptional activator activated by proteolytic cleavage through regulated intramembrane proteolysis (RIP). Transcription factor involved in modulation of abscisic acid (ABA) signaling. Attenuates ABA sensitivity and glucose-induced ABA accumulation. Reduces the expression of ABI4 gene. This is NAC domain-containing protein 60 from Arabidopsis thaliana (Mouse-ear cress).